Reading from the N-terminus, the 599-residue chain is DNA-directed RNA polymerase III subunit RPC3 (599 aa).

A disordered region spans residues 350 to 375; the sequence is PKKRSASNGDDERPTKKIKTEDSDDI. Positions 359 to 370 are enriched in basic and acidic residues; the sequence is DDERPTKKIKTE. Positions 528–549 are leucine-zipper; that stretch reads LIFSMAEILSNIQAFREDHKIL.

The protein belongs to the RNA polymerase beta chain family. Component of the RNA polymerase III (Pol III) complex consisting of 17 subunits.

The protein resides in the nucleus. Functionally, DNA-dependent RNA polymerase catalyzes the transcription of DNA into RNA using the four ribonucleoside triphosphates as substrates. Specific core component of RNA polymerase III which synthesizes small RNAs, such as 5S rRNA and tRNAs. This chain is DNA-directed RNA polymerase III subunit RPC3 (RPC82), found in Scheffersomyces stipitis (strain ATCC 58785 / CBS 6054 / NBRC 10063 / NRRL Y-11545) (Yeast).